The primary structure comprises 568 residues: Phosphoprotein (568 aa).

Disordered regions lie at residues 1 to 23 (MDQD…GGRE) and 38 to 320 (SEPT…GIGE). Residues 7–20 (ILKEDSEVEREAPG) show a composition bias toward basic and acidic residues. Residues 33–41 (DAVLSSEPT) form an N0 binding region. Positions 50-59 (LHNTINTPQG) are enriched in polar residues. The residue at position 68 (Ser-68) is a Phosphoserine; by host. Basic and acidic residues predominate over residues 83–101 (RSGEESRVSGRTSKPEAEA). At Ser-125 the chain carries Phosphoserine; by host. Positions 150–168 (GIEDENREMAAHPDKRGED) are enriched in basic and acidic residues. Residues 191-206 (ASNNGRSMEPGSSHSA) show a composition bias toward polar residues. Ser-192, Ser-249, Ser-257, and Ser-260 each carry phosphoserine; by host. The interval 344–411 (FESSRDASYV…SFRDIYKRFS (68 aa)) is multimerization. Residues 364-429 (YAEMTFNVCG…LLMSNLSTLH (66 aa)) are a coiled coil. A l protein binding region spans residues 412-445 (EYQKEQNSLLMSNLSTLHIITDRGGKTDNTDSLT). Phosphoserine; by host occurs at positions 447 and 449. The interval 479–568 (DLIREDEFRD…VEEDIESLTN (90 aa)) is interaction with the nucleocapsid (N-RNA). The interval 496–516 (QERDTEPRASNASRLLPSKEK) is disordered. The segment at 547–566 (KTDQEVKAVMELVEEDIESL) is formation of N-RNA complex involved in transcription and replication.

The protein belongs to the respirovirus P protein family. As to quaternary structure, homotetramer. Interacts (via multimerization domain) with polymerase L; this interaction forms the polymerase complex. Interacts (via N-terminus) with N0; this interaction allows P to chaperon N0 before encapsidation and form the N-P complex. Interacts (via C-terminus) with N-RNA template; this interaction positions the polymerase on the template. Phosphorylated by PKC/PRKCZ, and other unknown kinases. Phosphorylation is necessary for viral transcription and replication. The N-terminus contains the majority of phosphorylated sites. Ser-249 is the major site of phosphorylation, but is not necessary for most functions.

It localises to the host cytoplasm. Essential cofactor of the RNA polymerase L that plays a central role in the transcription and replication by forming the polymerase complex with RNA polymerase L and recruiting L to the genomic N-RNA template for RNA synthesis. Also plays a central role in the encapsidation of nascent RNA chains by forming the encapsidation complex with the nucleocapsid protein N (N-P complex). Acts as a chaperone for newly synthesized free N protein, so-called N0, allowing encapsidation of nascent RNA chains during replication. The nucleoprotein protein N prevents excessive phosphorylation of P, which leads to down-regulation of viral transcription/ replication. Participates, together with N, in the formation of viral factories (viroplasms), which are large inclusions in the host cytoplasm where replication takes place. Recruits host PI4KB and remodel the host endoplasmic reticulum membrane to form viral replication factories. In Cavia cutleri (Guinea pig), this protein is Phosphoprotein (P/V/C).